A 230-amino-acid polypeptide reads, in one-letter code: 2,3-bisphosphoglycerate-dependent phosphoglycerate mutase (230 aa).

Residues 8 to 15 (RHGESEWN), 21 to 22 (TG), arginine 60, 87 to 90 (ERHY), lysine 98, 114 to 115 (RR), and 183 to 184 (GN) each bind substrate. Histidine 9 (tele-phosphohistidine intermediate) is an active-site residue. Glutamate 87 acts as the Proton donor/acceptor in catalysis.

It belongs to the phosphoglycerate mutase family. BPG-dependent PGAM subfamily.

It catalyses the reaction (2R)-2-phosphoglycerate = (2R)-3-phosphoglycerate. The protein operates within carbohydrate degradation; glycolysis; pyruvate from D-glyceraldehyde 3-phosphate: step 3/5. Its function is as follows. Catalyzes the interconversion of 2-phosphoglycerate and 3-phosphoglycerate. In Streptococcus mutans serotype c (strain ATCC 700610 / UA159), this protein is 2,3-bisphosphoglycerate-dependent phosphoglycerate mutase.